Here is a 109-residue protein sequence, read N- to C-terminus: C-X-C motif chemokine 13 (109 aa).

Residues 1 to 21 (MRLSTATLLLLLASCLSPGHG) form the signal peptide. Disulfide bonds link Cys-32-Cys-59 and Cys-34-Cys-75.

The protein belongs to the intercrine alpha (chemokine CxC) family. In terms of tissue distribution, found in spleen (B-cell-rich zone or follicles), Peyer patches (strongest within germinal centers and extending to the mantle zone) and lymph nodes (in reticular pattern in follicles).

The protein localises to the secreted. Functionally, strongly chemotactic for B-lymphocytes, weakly for spleen monocytes and macrophages but no chemotactic activity for granulocytes. Binds to BLR1/CXCR5. May play a role in directing the migration of B-lymphocytes to follicles in secondary lymphoid organs. The sequence is that of C-X-C motif chemokine 13 (Cxcl13) from Mus musculus (Mouse).